We begin with the raw amino-acid sequence, 277 residues long: NLP effector protein Pc109174 (277 aa).

The first 19 residues, 1–19, serve as a signal peptide directing secretion; sequence MNLVPALVLLLALAQTVLG. Residues 119–125 carry the Hepta-peptide GHRHDWE motif motif; it reads KSRHLWA. N-linked (GlcNAc...) asparagine glycosylation occurs at N199.

Belongs to the Necrosis inducing protein (NPP1) family.

It is found in the secreted. Functionally, secreted effector that contributes strongly to virulence during infection by P.capsici. Induces cell death in the Solanaceae, including hot pepper. This Phytophthora capsici protein is NLP effector protein Pc109174.